Consider the following 399-residue polypeptide: Methylthioribose kinase (399 aa).

ATP is bound by residues Asn-40, Lys-57, and 111-113 (EDL). Asp-229 serves as a coordination point for substrate. Position 246–248 (246–248 (DAE)) interacts with ATP. Position 344 (Arg-344) interacts with substrate.

This sequence belongs to the methylthioribose kinase family. In terms of assembly, homodimer.

The catalysed reaction is 5-(methylsulfanyl)-D-ribose + ATP = 5-(methylsulfanyl)-alpha-D-ribose 1-phosphate + ADP + H(+). Its pathway is amino-acid biosynthesis; L-methionine biosynthesis via salvage pathway; S-methyl-5-thio-alpha-D-ribose 1-phosphate from S-methyl-5'-thioadenosine (hydrolase route): step 2/2. In terms of biological role, catalyzes the phosphorylation of methylthioribose into methylthioribose-1-phosphate. The protein is Methylthioribose kinase of Erwinia tasmaniensis (strain DSM 17950 / CFBP 7177 / CIP 109463 / NCPPB 4357 / Et1/99).